The following is a 397-amino-acid chain: Elongation factor Tu (397 aa).

Residues 10 to 206 (KPHCNIGTIG…AVDEYIPQPE (197 aa)) form the tr-type G domain. The G1 stretch occupies residues 19–26 (GHIDHGKT). 19 to 26 (GHIDHGKT) contacts GTP. Thr-26 is a binding site for Mg(2+). The segment at 62-66 (GITIS) is G2. Residues 83-86 (DCPG) are G3. GTP contacts are provided by residues 83-87 (DCPGH) and 138-141 (NKCD). The G4 stretch occupies residues 138–141 (NKCD). Positions 176–178 (SAF) are G5.

Belongs to the TRAFAC class translation factor GTPase superfamily. Classic translation factor GTPase family. EF-Tu/EF-1A subfamily. Monomer.

It localises to the cytoplasm. It catalyses the reaction GTP + H2O = GDP + phosphate + H(+). Functionally, GTP hydrolase that promotes the GTP-dependent binding of aminoacyl-tRNA to the A-site of ribosomes during protein biosynthesis. The protein is Elongation factor Tu of Cutibacterium acnes (strain DSM 16379 / KPA171202) (Propionibacterium acnes).